The primary structure comprises 374 residues: uncharacterized protein (374 aa).

The span at Met1–Thr13 shows a compositional bias: basic and acidic residues. Disordered stretches follow at residues Met1 to Lys20, Ser91 to Gln193, and Lys236 to Glu374. The segment covering Asn95 to Asn155 has biased composition (low complexity). Over residues Ile166–Gln193 the composition is skewed to polar residues. A compositionally biased stretch (pro residues) spans Ala242–Ile262. The segment covering Asn277–Thr300 has biased composition (low complexity).

This is an uncharacterized protein from Dictyostelium discoideum (Social amoeba).